The chain runs to 1089 residues: SUMO-specific isopeptidase USPL1 (1089 aa).

The tract at residues 90–128 is disordered; that stretch reads LISPDSEDCPTPSKPQKRKRLETNCRNSPLPVHSKKTRS. A USP domain is found at 215–488; sequence VQWKNTQALC…ETHIVIWERK (274 aa). The active-site Nucleophile is the C224. An SUMO-binding region spans residues 224 to 483; that stretch reads CWLDCILSAL…EVPASETHIV (260 aa). H444 functions as the Proton acceptor in the catalytic mechanism. 4 disordered regions span residues 687–739, 791–817, 835–868, and 891–928; these read DSQT…KEDQ, ISRR…SPPL, LREQ…AAED, and LISS…CGSP. The span at 719 to 733 shows a compositional bias: polar residues; the sequence is TASSKTVAARSAQNQ. Residues 791–803 show a composition bias toward basic residues; the sequence is ISRRSKRMSRKAK. Phosphoserine is present on S894. Residues 895 to 907 are compositionally biased toward basic and acidic residues; sequence PHREPSLSDHSEP.

It belongs to the peptidase C19 family. In terms of assembly, interacts with ELL.

It localises to the nucleus. The protein localises to the cajal body. Functionally, SUMO-specific isopeptidase involved in protein desumoylation. Specifically binds SUMO proteins with a higher affinity for SUMO2 and SUMO3 which it cleaves more efficiently. Also able to process full-length SUMO proteins to their mature forms. Plays a key role in RNA polymerase-II-mediated snRNA transcription in the Cajal bodies. Is a component of complexes that can bind to U snRNA genes. The protein is SUMO-specific isopeptidase USPL1 (Uspl1) of Mus musculus (Mouse).